An 89-amino-acid chain; its full sequence is Small ribosomal subunit protein uS15 (89 aa).

It belongs to the universal ribosomal protein uS15 family. As to quaternary structure, part of the 30S ribosomal subunit. Forms a bridge to the 50S subunit in the 70S ribosome, contacting the 23S rRNA.

One of the primary rRNA binding proteins, it binds directly to 16S rRNA where it helps nucleate assembly of the platform of the 30S subunit by binding and bridging several RNA helices of the 16S rRNA. Functionally, forms an intersubunit bridge (bridge B4) with the 23S rRNA of the 50S subunit in the ribosome. The chain is Small ribosomal subunit protein uS15 from Cupriavidus metallidurans (strain ATCC 43123 / DSM 2839 / NBRC 102507 / CH34) (Ralstonia metallidurans).